The sequence spans 320 residues: tRNA uridine(34) hydroxylase (320 aa).

A Rhodanese domain is found at 123 to 217 (EDENTVILDA…YGKDPETKGL (95 aa)). Cys-177 functions as the Cysteine persulfide intermediate in the catalytic mechanism.

This sequence belongs to the TrhO family.

It carries out the reaction uridine(34) in tRNA + AH2 + O2 = 5-hydroxyuridine(34) in tRNA + A + H2O. Functionally, catalyzes oxygen-dependent 5-hydroxyuridine (ho5U) modification at position 34 in tRNAs. In Staphylococcus epidermidis (strain ATCC 35984 / DSM 28319 / BCRC 17069 / CCUG 31568 / BM 3577 / RP62A), this protein is tRNA uridine(34) hydroxylase.